The sequence spans 255 residues: Probable cyclic nucleotide phosphodiesterase syc0937_d (255 aa).

7 residues coordinate Fe cation: D19, H21, D59, N89, H157, H196, and H198. Residues H21, D59, and 89–90 (NH) contribute to the AMP site. Residue H198 coordinates AMP.

The protein belongs to the cyclic nucleotide phosphodiesterase class-III family. The cofactor is Fe(2+).

This is Probable cyclic nucleotide phosphodiesterase syc0937_d from Synechococcus sp. (strain ATCC 27144 / PCC 6301 / SAUG 1402/1) (Anacystis nidulans).